Consider the following 173-residue polypeptide: Small ribosomal subunit protein uS9 (173 aa).

Positions 20–53 (SYTTESEVPVEGEYTSESVASRFGEPQPAAGLGR) are disordered.

The protein belongs to the universal ribosomal protein uS9 family.

This Streptomyces avermitilis (strain ATCC 31267 / DSM 46492 / JCM 5070 / NBRC 14893 / NCIMB 12804 / NRRL 8165 / MA-4680) protein is Small ribosomal subunit protein uS9.